A 155-amino-acid chain; its full sequence is Putative pre-16S rRNA nuclease (155 aa).

The protein belongs to the YqgF nuclease family.

Its subcellular location is the cytoplasm. In terms of biological role, could be a nuclease involved in processing of the 5'-end of pre-16S rRNA. This chain is Putative pre-16S rRNA nuclease, found in Novosphingobium aromaticivorans (strain ATCC 700278 / DSM 12444 / CCUG 56034 / CIP 105152 / NBRC 16084 / F199).